The primary structure comprises 81 residues: Accessory gland protein Acp63F (81 aa).

The first 16 residues, 1–16 (MKAIIVFILFISSVHA), serve as a signal peptide directing secretion.

Main cells of accessory gland and seminal fluid.

The protein localises to the secreted. Functionally, responsible for physiological and behavioral changes in mated female flies. The chain is Accessory gland protein Acp63F (Acp63F) from Drosophila melanogaster (Fruit fly).